Reading from the N-terminus, the 225-residue chain is Thylakoid lumenal 17.9 kDa protein, chloroplastic (225 aa).

The protein localises to the plastid. It is found in the chloroplast thylakoid lumen. This is Thylakoid lumenal 17.9 kDa protein, chloroplastic from Arabidopsis thaliana (Mouse-ear cress).